A 319-amino-acid polypeptide reads, in one-letter code: tRNA uridine(34) hydroxylase (319 aa).

Residues 123–221 (GDPDVVVIDT…YLETIPPEQS (99 aa)) form the Rhodanese domain. Residue Cys-181 is the Cysteine persulfide intermediate of the active site. Residues 298 to 319 (ARQQVHIGASPEPKAMPATAGR) are disordered.

The protein belongs to the TrhO family.

It catalyses the reaction uridine(34) in tRNA + AH2 + O2 = 5-hydroxyuridine(34) in tRNA + A + H2O. Its function is as follows. Catalyzes oxygen-dependent 5-hydroxyuridine (ho5U) modification at position 34 in tRNAs. The polypeptide is tRNA uridine(34) hydroxylase (Albidiferax ferrireducens (strain ATCC BAA-621 / DSM 15236 / T118) (Rhodoferax ferrireducens)).